A 471-amino-acid chain; its full sequence is 5-hydroxytryptamine receptor 2A (471 aa).

At 1-80 the chain is on the extracellular side; that stretch reads MDILCEENTS…LQEKNWSALL (80 aa). The N-linked (GlcNAc...) asparagine glycan is linked to asparagine 38. Residues 81–97 traverse the membrane as a helical segment; it reads TAVVIILTIAGNILVIM. Topologically, residues 98–111 are cytoplasmic; sequence AVSLEKKLQNATNY. A helical transmembrane segment spans residues 112 to 137; it reads FLMSLAIADMLLGFLVMPVSMLTILY. At 138–146 the chain is on the extracellular side; it reads GYRWPLPSK. The helical transmembrane segment at 147–171 threads the bilayer; sequence LCAVWIYLDVLFSTASIMHLCAISL. Cysteine 148 and cysteine 227 are oxidised to a cystine. Serotonin is bound at residue aspartate 155. Residues 172 to 174 carry the DRY motif; important for ligand-induced conformation changes motif; that stretch reads DRY. At 172–191 the chain is on the cytoplasmic side; it reads DRYVAIQNPIHHSRFNSRTK. Residues 192–215 form a helical membrane-spanning segment; sequence AFLKIIAVWTISVGISMPIPVFGL. Residues 216–232 lie on the Extracellular side of the membrane; sequence QDDSKVFKEGSCLLADD. A helical membrane pass occupies residues 233–258; it reads NFVLIGSFVSFFIPLTIMVITYFLTI. Residues 259 to 322 are Cytoplasmic-facing; sequence KSLQKEATLC…QSISNEQKAC (64 aa). The residue at position 280 (serine 280) is a Phosphoserine. The chain crosses the membrane as a helical span at residues 323-348; sequence KVLGIVFSLFVVMWCPFFITNIMAVI. Asparagine 343 provides a ligand contact to serotonin. Cysteine 349 and cysteine 353 form a disulfide bridge. At 349–356 the chain is on the extracellular side; that stretch reads CKESCNED. A helical transmembrane segment spans residues 357–382; it reads VIGALLNVFVWIGYLSSAVNPLVYTL. Residues 376–380 carry the NPxxY motif; important for ligand-induced conformation changes and signaling motif; the sequence is NPLVY. Topologically, residues 383-471 are cytoplasmic; the sequence is FNKTYRSAFS…DGVNEKVSCV (89 aa). The disordered stretch occupies residues 450 to 471; that stretch reads KQHSEDASKDNSDGVNEKVSCV. The span at 451-465 shows a compositional bias: basic and acidic residues; it reads QHSEDASKDNSDGVN. Residues 469–471 carry the PDZ-binding motif; sequence SCV.

It belongs to the G-protein coupled receptor 1 family. Interacts (via C-terminus) with MPDZ and PATJ. May interact (via C-terminus) with MPP3, PRDX6, DLG4, DLG1, CASK, APBA1 and MAGI2. Interacts with GRM2 and DRD2; this may affect signaling.

It localises to the cell membrane. Its subcellular location is the cell projection. It is found in the dendrite. The protein resides in the axon. The protein localises to the cytoplasmic vesicle. It localises to the membrane. Its subcellular location is the caveola. It is found in the presynapse. With respect to regulation, G-protein coupled receptor activity is regulated by lipids: oleamide increases HTR2A-mediated activity. G-protein coupled receptor for 5-hydroxytryptamine (serotonin). Also functions as a receptor for various drugs and psychoactive substances, including mescaline, psilocybin, 1-(2,5-dimethoxy-4-iodophenyl)-2-aminopropane (DOI) and lysergic acid diethylamide (LSD). Ligand binding causes a conformation change that triggers signaling via guanine nucleotide-binding proteins (G proteins) and modulates the activity of downstream effectors. HTR2A is coupled to G(q)/G(11) G alpha proteins and activates phospholipase C-beta, releasing diacylglycerol (DAG) and inositol 1,4,5-trisphosphate (IP3) second messengers that modulate the activity of phosphatidylinositol 3-kinase and promote the release of Ca(2+) ions from intracellular stores, respectively. Beta-arrestin family members inhibit signaling via G proteins and mediate activation of alternative signaling pathways. Affects neural activity, perception, cognition and mood. Plays a role in the regulation of behavior, including responses to anxiogenic situations and psychoactive substances. Plays a role in intestinal smooth muscle contraction, and may play a role in arterial vasoconstriction. The chain is 5-hydroxytryptamine receptor 2A (HTR2A) from Pongo pygmaeus (Bornean orangutan).